The primary structure comprises 151 residues: Inorganic triphosphatase (151 aa).

The 148-residue stretch at 1-148 folds into the CYTH domain; it reads MTEIERKFLV…KRYKNKALAL (148 aa). The active-site Proton acceptor is Tyr-27.

Homodimer.

The catalysed reaction is triphosphate + H2O = phosphate + diphosphate. With respect to regulation, activated by magnesium and mangenese ions, and inhibited by calcium, zinc and copper ions. Involved in the hydrolysis of the beta-gamma-phosphoanhydride linkage of triphosphate-containing substrates (inorganic or nucleoside-linked). Catalyzes the hydrolysis of inorganic triphosphate (PPPi). The enzyme has a strong preference for linear PPPi compared with cyclic PPPi (cyclic trimetaphosphate) and to the linear P4. The longer chains polyphosphate are not hydrolyzed. It has only a slight thiamine triphosphatase (ThTPase) activity. Nucleoside triphosphatase activity is negligible in the presence of magnesium, but a small activity is observed in the presence of manganese, in particular with GTP. This Nitrosomonas europaea (strain ATCC 19718 / CIP 103999 / KCTC 2705 / NBRC 14298) protein is Inorganic triphosphatase.